Consider the following 259-residue polypeptide: Trypsin (259 aa).

An N-terminal signal peptide occupies residues 1–32; that stretch reads MKHFLRALKRCSVAVATVAIAVVGLQPVTASA. The propeptide at 33-36 is activation peptide; it reads APNP. In terms of domain architecture, Peptidase S1 spans 37 to 257; the sequence is VVGGTRAAQG…FASAIASAAR (221 aa). The cysteines at positions 58 and 74 are disulfide-linked. Residues H73 and D118 each act as charge relay system in the active site. 2 disulfides stabilise this stretch: C177-C192 and C204-C233. S208 functions as the Charge relay system in the catalytic mechanism.

This sequence belongs to the peptidase S1 family.

It carries out the reaction Preferential cleavage: Arg-|-Xaa, Lys-|-Xaa.. This is Trypsin (sprT) from Streptomyces griseus.